Here is a 408-residue protein sequence, read N- to C-terminus: (R)-2-hydroxyisocaproyl-CoA dehydratase alpha subunit (408 aa).

A substrate-binding site is contributed by Glu-55. Residues Cys-84, Cys-117, and Cys-346 each coordinate [4Fe-4S] cluster.

Belongs to the FldB/FldC dehydratase alpha/beta subunit family. As to quaternary structure, part of the heterodimeric complex HadBC composed of (R)-2-hydroxyisocaproyl-CoA dehydratase alpha (HadB) and beta (HadC) subunit. [4Fe-4S] cluster is required as a cofactor.

It catalyses the reaction (R)-2-hydroxy-4-methylpentanoyl-CoA = 4-methylpent-2-enoyl-CoA + H2O. With respect to regulation, activated by HadI. In terms of biological role, involved in the reductive branch of L-leucine fermentation. Catalyzes the irreversible beta/alpha-elimination of water from (R)-2-hydroxyisocaproyl-CoA to yield isocaprenoyl-CoA. This beta/alpha-dehydration depends on the reductive formation of ketyl radicals on the substrate generated by injection of a single electron from the ATP-dependent activator protein HadI. The enzyme is specific for the R-isomer. The sequence is that of (R)-2-hydroxyisocaproyl-CoA dehydratase alpha subunit from Clostridioides difficile (Peptoclostridium difficile).